The sequence spans 371 residues: Chaperone protein DnaJ (371 aa).

Residues 5 to 69 form the J domain; the sequence is DYYEVLGLSK…QKRAQYDQFG (65 aa). The segment at 133 to 215 adopts a CR-type zinc-finger fold; it reads GKELNVEIPV…CHGSGKVRKR (83 aa). Zn(2+) contacts are provided by Cys-146, Cys-149, Cys-163, Cys-166, Cys-189, Cys-192, Cys-203, and Cys-206. CXXCXGXG motif repeat units lie at residues 146–153, 163–170, 189–196, and 203–210; these read CDTCKGSG, CKHCSGSG, CGHCSGTG, and CTTCHGSG.

It belongs to the DnaJ family. Homodimer. Zn(2+) is required as a cofactor.

It localises to the cytoplasm. Functionally, participates actively in the response to hyperosmotic and heat shock by preventing the aggregation of stress-denatured proteins and by disaggregating proteins, also in an autonomous, DnaK-independent fashion. Unfolded proteins bind initially to DnaJ; upon interaction with the DnaJ-bound protein, DnaK hydrolyzes its bound ATP, resulting in the formation of a stable complex. GrpE releases ADP from DnaK; ATP binding to DnaK triggers the release of the substrate protein, thus completing the reaction cycle. Several rounds of ATP-dependent interactions between DnaJ, DnaK and GrpE are required for fully efficient folding. Also involved, together with DnaK and GrpE, in the DNA replication of plasmids through activation of initiation proteins. In Bacillus cereus (strain ATCC 10987 / NRS 248), this protein is Chaperone protein DnaJ.